A 124-amino-acid polypeptide reads, in one-letter code: Peptidyl-tRNA hydrolase (124 aa).

It belongs to the PTH2 family.

The protein localises to the cytoplasm. The catalysed reaction is an N-acyl-L-alpha-aminoacyl-tRNA + H2O = an N-acyl-L-amino acid + a tRNA + H(+). Its function is as follows. The natural substrate for this enzyme may be peptidyl-tRNAs which drop off the ribosome during protein synthesis. The chain is Peptidyl-tRNA hydrolase from Aeropyrum pernix (strain ATCC 700893 / DSM 11879 / JCM 9820 / NBRC 100138 / K1).